A 429-amino-acid polypeptide reads, in one-letter code: Maltoporin 2 (429 aa).

The N-terminal stretch at 1–25 (MMITLRKLPLAVAVAAGVMSAQALA) is a signal peptide. Residues 397–412 (GLQTKDSSGSGAFTSS) show a composition bias toward polar residues. Residues 397 to 416 (GLQTKDSSGSGAFTSSRGDD) are disordered.

The protein belongs to the porin LamB (TC 1.B.3) family. As to quaternary structure, homotrimer formed of three 18-stranded antiparallel beta-barrels, containing three independent channels.

The protein resides in the cell outer membrane. The catalysed reaction is beta-maltose(in) = beta-maltose(out). Involved in the transport of maltose and maltodextrins. The protein is Maltoporin 2 of Klebsiella pneumoniae subsp. pneumoniae (strain ATCC 700721 / MGH 78578).